The primary structure comprises 152 residues: Clitocypin-4/-3 (152 aa).

Belongs to the protease inhibitor I48 family. In terms of assembly, homodimer.

In terms of biological role, binds and inhibits cysteine proteinases. Inhibits most strongly papain and cathepsin L, more weakly bromelain and cathepsin B while it is completely ineffective against cathepsin H. The sequence is that of Clitocypin-4/-3 (clt4) from Clitocybe nebularis (Clouded agaric).